Consider the following 66-residue polypeptide: Large ribosomal subunit protein uL29 (66 aa).

Belongs to the universal ribosomal protein uL29 family.

The protein is Large ribosomal subunit protein uL29 of Borreliella afzelii (strain PKo) (Borrelia afzelii).